The sequence spans 288 residues: Polyamine aminopropyltransferase (288 aa).

In terms of domain architecture, PABS spans 9–238; sequence ETLHDQFGQY…GIMTFAWATD (230 aa). Gln-33 provides a ligand contact to S-methyl-5'-thioadenosine. Spermidine contacts are provided by His-64 and Asp-88. Residues Glu-108 and 140–141 contribute to the S-methyl-5'-thioadenosine site; that span reads DG. The active-site Proton acceptor is Asp-158. 158 to 161 contributes to the spermidine binding site; the sequence is DCTD. Pro-165 is an S-methyl-5'-thioadenosine binding site.

It belongs to the spermidine/spermine synthase family. As to quaternary structure, homodimer or homotetramer.

It is found in the cytoplasm. The catalysed reaction is S-adenosyl 3-(methylsulfanyl)propylamine + putrescine = S-methyl-5'-thioadenosine + spermidine + H(+). It functions in the pathway amine and polyamine biosynthesis; spermidine biosynthesis; spermidine from putrescine: step 1/1. Functionally, catalyzes the irreversible transfer of a propylamine group from the amino donor S-adenosylmethioninamine (decarboxy-AdoMet) to putrescine (1,4-diaminobutane) to yield spermidine. In Shigella sonnei (strain Ss046), this protein is Polyamine aminopropyltransferase.